The chain runs to 298 residues: Transcription factor SRM1 (298 aa).

Residues 7 to 62 (SDGSVWSREDDIAFERALANNTDESEERWEKIAADVPGKSVEQIKEHYELLVEDVT) form the SANT domain. A disordered region spans residues 68–118 (CVPLPAYGSPEGSNGHAGDEGASSKKGGNSHAGESNQAGKSKSDQERRKGI). The segment covering 108–118 (SKSDQERRKGI) has biased composition (basic and acidic residues). Residues 111 to 168 (DQERRKGIAWTEDEHRLFLLGLDKYGKGDWRSISRNFVVTRTPTQVASHAQKYFIRLN) form the HTH myb-type domain. A DNA-binding region (H-T-H motif) is located at residues 140–164 (WRSISRNFVVTRTPTQVASHAQKYF). Residues 182-200 (ITSVGNADVSTPQGPITGQ) show a composition bias toward polar residues. The interval 182–245 (ITSVGNADVS…GPPMYGTPAI (64 aa)) is disordered. The segment covering 201–215 (NNSNNNNNNNNNNSS) has biased composition (low complexity).

Expressed in young seedlings, developing leaves, sepals and trichomes.

Its subcellular location is the nucleus. Functionally, transcription activator that coordinates abscisic acid (ABA) biosynthesis and signaling-related genes via binding to the specific promoter motif 5'-(A/T)AACCAT-3'. Represses ABA-mediated salt (e.g. NaCl and KCl) stress tolerance. Regulates leaf shape and promotes vegetative growth. This is Transcription factor SRM1 from Arabidopsis thaliana (Mouse-ear cress).